A 282-amino-acid polypeptide reads, in one-letter code: Hydroxyethylthiazole kinase 2 (282 aa).

Residue methionine 44 participates in substrate binding. Positions 120 and 179 each coordinate ATP. Position 206 (glycine 206) interacts with substrate.

This sequence belongs to the Thz kinase family. Mg(2+) serves as cofactor.

The catalysed reaction is 5-(2-hydroxyethyl)-4-methylthiazole + ATP = 4-methyl-5-(2-phosphooxyethyl)-thiazole + ADP + H(+). The protein operates within cofactor biosynthesis; thiamine diphosphate biosynthesis; 4-methyl-5-(2-phosphoethyl)-thiazole from 5-(2-hydroxyethyl)-4-methylthiazole: step 1/1. Functionally, catalyzes the phosphorylation of the hydroxyl group of 4-methyl-5-beta-hydroxyethylthiazole (THZ). The protein is Hydroxyethylthiazole kinase 2 of Methanosphaera stadtmanae (strain ATCC 43021 / DSM 3091 / JCM 11832 / MCB-3).